The following is a 235-amino-acid chain: Phosphoribosylformylglycinamidine synthase subunit PurQ (235 aa).

Residues 3–234 (FGVLVFPGSN…LNSLMAQGVT (232 aa)) enclose the Glutamine amidotransferase type-1 domain. The active-site Nucleophile is the cysteine 86. Residues histidine 203 and glutamate 205 contribute to the active site.

Part of the FGAM synthase complex composed of 1 PurL, 1 PurQ and 2 PurS subunits.

It localises to the cytoplasm. The enzyme catalyses N(2)-formyl-N(1)-(5-phospho-beta-D-ribosyl)glycinamide + L-glutamine + ATP + H2O = 2-formamido-N(1)-(5-O-phospho-beta-D-ribosyl)acetamidine + L-glutamate + ADP + phosphate + H(+). It catalyses the reaction L-glutamine + H2O = L-glutamate + NH4(+). It participates in purine metabolism; IMP biosynthesis via de novo pathway; 5-amino-1-(5-phospho-D-ribosyl)imidazole from N(2)-formyl-N(1)-(5-phospho-D-ribosyl)glycinamide: step 1/2. Its function is as follows. Part of the phosphoribosylformylglycinamidine synthase complex involved in the purines biosynthetic pathway. Catalyzes the ATP-dependent conversion of formylglycinamide ribonucleotide (FGAR) and glutamine to yield formylglycinamidine ribonucleotide (FGAM) and glutamate. The FGAM synthase complex is composed of three subunits. PurQ produces an ammonia molecule by converting glutamine to glutamate. PurL transfers the ammonia molecule to FGAR to form FGAM in an ATP-dependent manner. PurS interacts with PurQ and PurL and is thought to assist in the transfer of the ammonia molecule from PurQ to PurL. The protein is Phosphoribosylformylglycinamidine synthase subunit PurQ of Acaryochloris marina (strain MBIC 11017).